Consider the following 82-residue polypeptide: RNA-binding protein Hfq (82 aa).

A Sm domain is found at 11 to 71; the sequence is DTFLNHVRKT…ISTIMPGAPI (61 aa).

It belongs to the Hfq family. In terms of assembly, homohexamer.

Functionally, RNA chaperone that binds small regulatory RNA (sRNAs) and mRNAs to facilitate mRNA translational regulation in response to envelope stress, environmental stress and changes in metabolite concentrations. Also binds with high specificity to tRNAs. In Nitrobacter winogradskyi (strain ATCC 25391 / DSM 10237 / CIP 104748 / NCIMB 11846 / Nb-255), this protein is RNA-binding protein Hfq.